The following is a 374-amino-acid chain: Spore germination protein GerLB (374 aa).

10 consecutive transmembrane segments (helical) span residues Ile-16–Ile-36, Asp-44–Thr-64, Pro-86–Glu-106, Thr-122–Ser-142, Leu-149–Ile-169, Val-192–Leu-212, Ala-227–Thr-247, Phe-279–Leu-301, Ile-313–Asn-333, and Tyr-341–Tyr-361.

It belongs to the amino acid-polyamine-organocation (APC) superfamily. Spore germination protein (SGP) (TC 2.A.3.9) family.

It localises to the membrane. Its function is as follows. Contributes to the L-alanine germination response. This is Spore germination protein GerLB (gerLB) from Bacillus cereus.